A 425-amino-acid chain; its full sequence is Dihydroorotase (425 aa).

Zn(2+) is bound by residues His-56 and His-58. Substrate is bound by residues 58 to 60 (HYR) and Asn-90. 3 residues coordinate Zn(2+): Asp-148, His-175, and His-228. Asn-274 provides a ligand contact to substrate. Asp-301 lines the Zn(2+) pocket. Residue Asp-301 is part of the active site. Substrate-binding positions include His-305 and 319 to 320 (FG).

The protein belongs to the metallo-dependent hydrolases superfamily. DHOase family. Class I DHOase subfamily. Zn(2+) serves as cofactor.

It carries out the reaction (S)-dihydroorotate + H2O = N-carbamoyl-L-aspartate + H(+). It functions in the pathway pyrimidine metabolism; UMP biosynthesis via de novo pathway; (S)-dihydroorotate from bicarbonate: step 3/3. In terms of biological role, catalyzes the reversible cyclization of carbamoyl aspartate to dihydroorotate. This chain is Dihydroorotase, found in Lactobacillus gasseri (strain ATCC 33323 / DSM 20243 / BCRC 14619 / CIP 102991 / JCM 1131 / KCTC 3163 / NCIMB 11718 / NCTC 13722 / AM63).